The following is a 962-amino-acid chain: Translation initiation factor IF-2 (962 aa).

3 disordered regions span residues 122 to 263 (EVGV…EPAR), 293 to 327 (TEEV…TRRK), and 341 to 362 (IAAQ…AKEP). Low complexity predominate over residues 156–173 (AVEPQTVVPPVAAPAAEV). The segment covering 188–202 (KPPEEKETKVKHAEP) has biased composition (basic and acidic residues). Over residues 244 to 256 (RPKKAKKRRRKKV) the composition is skewed to basic residues. Basic and acidic residues-rich tracts occupy residues 308–327 (RPEE…TRRK) and 344–362 (QDDR…AKEP). The 170-residue stretch at 455–624 (RRPPVITVMG…LLQAELLELK (170 aa)) folds into the tr-type G domain. Positions 464–471 (GHVDHGKT) are G1. Residue 464–471 (GHVDHGKT) coordinates GTP. A G2 region spans residues 489–493 (GITQH). Residues 510–513 (DTPG) are G3. Residues 510 to 514 (DTPGH) and 564 to 567 (NKVD) each bind GTP. A G4 region spans residues 564–567 (NKVD). The G5 stretch occupies residues 600 to 602 (SAK).

Belongs to the TRAFAC class translation factor GTPase superfamily. Classic translation factor GTPase family. IF-2 subfamily.

The protein localises to the cytoplasm. One of the essential components for the initiation of protein synthesis. Protects formylmethionyl-tRNA from spontaneous hydrolysis and promotes its binding to the 30S ribosomal subunits. Also involved in the hydrolysis of GTP during the formation of the 70S ribosomal complex. The sequence is that of Translation initiation factor IF-2 from Syntrophobacter fumaroxidans (strain DSM 10017 / MPOB).